A 184-amino-acid chain; its full sequence is Large ribosomal subunit protein uL5 (184 aa).

This sequence belongs to the universal ribosomal protein uL5 family. Part of the 50S ribosomal subunit; part of the 5S rRNA/L5/L18/L25 subcomplex. Contacts the 5S rRNA and the P site tRNA. Forms a bridge to the 30S subunit in the 70S ribosome.

Functionally, this is one of the proteins that bind and probably mediate the attachment of the 5S RNA into the large ribosomal subunit, where it forms part of the central protuberance. In the 70S ribosome it contacts protein S13 of the 30S subunit (bridge B1b), connecting the 2 subunits; this bridge is implicated in subunit movement. Contacts the P site tRNA; the 5S rRNA and some of its associated proteins might help stabilize positioning of ribosome-bound tRNAs. The chain is Large ribosomal subunit protein uL5 from Corynebacterium kroppenstedtii (strain DSM 44385 / JCM 11950 / CIP 105744 / CCUG 35717).